The sequence spans 167 residues: UPF0254 protein MJ1251 (167 aa).

Belongs to the UPF0254 family.

The chain is UPF0254 protein MJ1251 from Methanocaldococcus jannaschii (strain ATCC 43067 / DSM 2661 / JAL-1 / JCM 10045 / NBRC 100440) (Methanococcus jannaschii).